The following is a 218-amino-acid chain: Small ribosomal subunit protein uS7m (218 aa).

The transit peptide at 1 to 19 directs the protein to the mitochondrion; the sequence is MSLLGRIAEKTSRLSCLRL.

It belongs to the universal ribosomal protein uS7 family. In terms of assembly, component of the mitochondrial ribosome small subunit (28S) which comprises a 12S rRNA and about 30 distinct proteins.

It localises to the mitochondrion. The protein is Small ribosomal subunit protein uS7m (mRpS7) of Drosophila melanogaster (Fruit fly).